Here is a 312-residue protein sequence, read N- to C-terminus: Signal peptidase I (312 aa).

A helical membrane pass occupies residues 7-27 (IFLLTSTFFTGILWIIDHILL). Over 28–63 (IKNYFYNKKKTKNNNTILINKVILENKKCFFRSLSS) the chain is Cytoplasmic. Residues 64–84 (LFPTFFIVFIIRSFIYEPFQI) traverse the membrane as a helical segment. Topologically, residues 85–312 (PSGSMMPTLL…IRIKRIGNIY (228 aa)) are extracellular. Active-site residues include S88 and K142.

This sequence belongs to the peptidase S26 family.

Its subcellular location is the cell membrane. It catalyses the reaction Cleavage of hydrophobic, N-terminal signal or leader sequences from secreted and periplasmic proteins.. The sequence is that of Signal peptidase I (lepB) from Buchnera aphidicola subsp. Schizaphis graminum (strain Sg).